Consider the following 300-residue polypeptide: NAD kinase (300 aa).

The Proton acceptor role is filled by Asp80. NAD(+) contacts are provided by residues 80 to 81, 154 to 155, Arg165, Arg182, Asp184, 195 to 200, and Gln253; these read DG, ND, and TAYALS.

This sequence belongs to the NAD kinase family. Requires a divalent metal cation as cofactor.

It localises to the cytoplasm. The enzyme catalyses NAD(+) + ATP = ADP + NADP(+) + H(+). Involved in the regulation of the intracellular balance of NAD and NADP, and is a key enzyme in the biosynthesis of NADP. Catalyzes specifically the phosphorylation on 2'-hydroxyl of the adenosine moiety of NAD to yield NADP. This Aromatoleum aromaticum (strain DSM 19018 / LMG 30748 / EbN1) (Azoarcus sp. (strain EbN1)) protein is NAD kinase.